A 241-amino-acid chain; its full sequence is Eukaryotic translation initiation factor 6 (241 aa).

This sequence belongs to the eIF-6 family. Monomer. Associates with the 60S ribosomal subunit.

The protein localises to the cytoplasm. It is found in the nucleus. It localises to the nucleolus. Functionally, binds to the 60S ribosomal subunit and prevents its association with the 40S ribosomal subunit to form the 80S initiation complex in the cytoplasm. Is also involved in ribosome biogenesis. Associates with pre-60S subunits in the nucleus and is involved in its nuclear export. In Encephalitozoon cuniculi (strain GB-M1) (Microsporidian parasite), this protein is Eukaryotic translation initiation factor 6.